A 133-amino-acid chain; its full sequence is Large ribosomal subunit protein uL15 (133 aa).

The interval Met1–Ile64 is disordered.

This sequence belongs to the universal ribosomal protein uL15 family. Part of the 50S ribosomal subunit.

Functionally, binds to the 23S rRNA. The protein is Large ribosomal subunit protein uL15 of Helicobacter pylori (strain J99 / ATCC 700824) (Campylobacter pylori J99).